The chain runs to 356 residues: Adenine deaminase (356 aa).

Residues His23, His25, and His211 each coordinate Zn(2+). The active-site Proton donor is the Glu214. Zn(2+) is bound at residue Asp292. Asp293 contacts substrate.

This sequence belongs to the metallo-dependent hydrolases superfamily. Adenosine and AMP deaminases family. Adenine deaminase type 2 subfamily. Zn(2+) is required as a cofactor.

The protein localises to the cytoplasm. Its subcellular location is the nucleus. The catalysed reaction is adenine + H2O + H(+) = hypoxanthine + NH4(+). Catalyzes the hydrolytic deamination of adenine to hypoxanthine. Plays an important role in the purine salvage pathway and in nitrogen catabolism. This chain is Adenine deaminase, found in Candida albicans (strain SC5314 / ATCC MYA-2876) (Yeast).